A 440-amino-acid chain; its full sequence is 5-hydroxytryptamine receptor 6 (440 aa).

Residues 1-27 lie on the Extracellular side of the membrane; that stretch reads MVPEPGPTANSTPAWGAGPPSAPGGSG. The helical transmembrane segment at 28–52 threads the bilayer; the sequence is WVAAALCVVIALTAAANSLLIALIC. Over 53–62 the chain is Cytoplasmic; that stretch reads TQPALRNTSN. Residues 63–88 traverse the membrane as a helical segment; sequence FFLVSLFTSDLMVGLVVMPPAMLNAL. The Extracellular portion of the chain corresponds to 89-96; it reads YGRWVLAR. Residues 97–122 form a helical membrane-spanning segment; that stretch reads GLCLLWTAFDVMCCSASILNLCLISL. An intrachain disulfide couples Cys99 to Cys180. Residue Asp106 coordinates serotonin. Residues 123 to 142 are Cytoplasmic-facing; sequence DRYLLILSPLRYKLRMTPLR. A helical transmembrane segment spans residues 143-167; the sequence is ALALVLGAWSLAALASFLPLLLGWH. Over 168-185 the chain is Extracellular; it reads ELGHARPPVPGQCRLLAS. The helical transmembrane segment at 186–209 threads the bilayer; that stretch reads LPFVLVASGLTFFLPSGAICFTYC. The Cytoplasmic portion of the chain corresponds to 210–266; it reads RILLAARKQAVQVASLTTGMASQASETLQVPRTPRPGVESADSRRLATKHSRKALKA. A helical membrane pass occupies residues 267–293; the sequence is SLTLGILLGMFFVTWLPFFVANIVQAV. Serotonin is bound at residue Asn288. Topologically, residues 294–299 are extracellular; sequence CDCISP. Residues 300–323 form a helical membrane-spanning segment; sequence GLFDVLTWLGYCNSTMNPIIYPLF. Over 324–440 the chain is Cytoplasmic; sequence MRDFKRALGR…RPHPLGIPTN (117 aa). The tract at residues 346-392 is disordered; sequence ASLASPSLRTSHSGPRPGLSLQQVLPLPLPPDSDSDSDAGSGGSSGL. Polar residues predominate over residues 347-358; that stretch reads SLASPSLRTSHS. Residues 362 to 371 show a composition bias toward low complexity; sequence PGLSLQQVLP.

It belongs to the G-protein coupled receptor 1 family. As to quaternary structure, interacts with MTOR, RPTOR and NF1. Interacts with CDK5. As to expression, expressed in several human brain regions, most prominently in the caudate nucleus.

The protein localises to the cell membrane. Functionally, G-protein coupled receptor for 5-hydroxytryptamine (serotonin), a biogenic hormone that functions as a neurotransmitter, a hormone and a mitogen. Also has a high affinity for tricyclic psychotropic drugs. Ligand binding causes a conformation change that triggers signaling via guanine nucleotide-binding proteins (G proteins) and modulates the activity of downstream effectors. HTR6 is coupled to G(s) G alpha proteins and mediates activation of adenylate cyclase activity. Controls pyramidal neurons migration during corticogenesis, through the regulation of CDK5 activity. Is an activator of mTOR signaling. The chain is 5-hydroxytryptamine receptor 6 from Homo sapiens (Human).